The sequence spans 459 residues: UDP-N-acetylmuramate--L-alanine ligase (459 aa).

118–124 (GTHGKTT) is a binding site for ATP.

Belongs to the MurCDEF family.

It is found in the cytoplasm. It carries out the reaction UDP-N-acetyl-alpha-D-muramate + L-alanine + ATP = UDP-N-acetyl-alpha-D-muramoyl-L-alanine + ADP + phosphate + H(+). It functions in the pathway cell wall biogenesis; peptidoglycan biosynthesis. Its function is as follows. Cell wall formation. In Lachnospira eligens (strain ATCC 27750 / DSM 3376 / VPI C15-48 / C15-B4) (Eubacterium eligens), this protein is UDP-N-acetylmuramate--L-alanine ligase.